Consider the following 226-residue polypeptide: ATP synthase F(0) complex subunit a (226 aa).

Helical transmembrane passes span 5 to 25 (LFASFIAPTILGLPAAVLIIL), 68 to 88 (WSLMLMWLIIFIATTNLLGLL), 97 to 117 (QLSMNLAMAIPLWAGAVTTGF), 138 to 158 (IPMLVIIETISLFIQPMALAV), 160 to 180 (LTANITAGHLLMHLIGSATLA), and 189 to 209 (TLIIFTVLILLTMLEIAVALI).

The protein belongs to the ATPase A chain family. Component of the ATP synthase complex composed at least of ATP5F1A/subunit alpha, ATP5F1B/subunit beta, ATP5MC1/subunit c (homooctomer), MT-ATP6/subunit a, MT-ATP8/subunit 8, ATP5ME/subunit e, ATP5MF/subunit f, ATP5MG/subunit g, ATP5MK/subunit k, ATP5MJ/subunit j, ATP5F1C/subunit gamma, ATP5F1D/subunit delta, ATP5F1E/subunit epsilon, ATP5PF/subunit F6, ATP5PB/subunit b, ATP5PD/subunit d, ATP5PO/subunit OSCP. ATP synthase complex consists of a soluble F(1) head domain (subunits alpha(3) and beta(3)) - the catalytic core - and a membrane F(0) domain - the membrane proton channel (subunits c, a, 8, e, f, g, k and j). These two domains are linked by a central stalk (subunits gamma, delta, and epsilon) rotating inside the F1 region and a stationary peripheral stalk (subunits F6, b, d, and OSCP). Interacts with DNAJC30; interaction is direct.

The protein resides in the mitochondrion inner membrane. The catalysed reaction is H(+)(in) = H(+)(out). In terms of biological role, subunit a, of the mitochondrial membrane ATP synthase complex (F(1)F(0) ATP synthase or Complex V) that produces ATP from ADP in the presence of a proton gradient across the membrane which is generated by electron transport complexes of the respiratory chain. ATP synthase complex consist of a soluble F(1) head domain - the catalytic core - and a membrane F(1) domain - the membrane proton channel. These two domains are linked by a central stalk rotating inside the F(1) region and a stationary peripheral stalk. During catalysis, ATP synthesis in the catalytic domain of F(1) is coupled via a rotary mechanism of the central stalk subunits to proton translocation. With the subunit c (ATP5MC1), forms the proton-conducting channel in the F(0) domain, that contains two crucial half-channels (inlet and outlet) that facilitate proton movement from the mitochondrial intermembrane space (IMS) into the matrix. Protons are taken up via the inlet half-channel and released through the outlet half-channel, following a Grotthuss mechanism. The sequence is that of ATP synthase F(0) complex subunit a from Gorilla gorilla gorilla (Western lowland gorilla).